The following is a 780-amino-acid chain: MLCSRYFTSSLFLWGEALPTLLEEFLNEVEKMLKNQVNTRRIHQLLKELDDPLLENKDLEEKLQAFLDYVKEIPNLPEARKRYRIQKSLEMIEKLRSWFLIDYLECSGEEVDLSTDIQYAKGVGPNRKKKLKKLGIETLRDLLEFFPRDYEDRRKIFKLNDLLPGEKVTTQGKIVSVETKKFQNMNILTAVLSDGLVHVPLKWFNQDYLQTYLKQLTGKEVFVTGTVKSNAYTGQYEIHNAEVTPKEGEYVRRILPIYRLTSGISQKQMRKIFEENIPSLCCSLKETLPERILEKRKLLGVKDAYYGMHFPKTFYHLEKARERLAYEELFVLQLAFQKIRKEREKHGGIPKKIEGKLAEEFIKSLPFKLTNAQKRAHQEIRNDMISEKPMNRLLQGDVGSGKTVVAQLAILDNYEAGFQTAFMVPTSILAIQHYRRTVESFSKFNIHVALLIGATTPSEKEKIKSGLRNGQIDVVIGTHALIQEDVHFKNLGLVIIDEQHRFGVKQREALMNKGKMVDTLVMSATPIPRSMALAFYGDLDVTVIDEMPPGRKEVQTMLVPMDRVNEVYEFVRQEVMRGGQAFIVYPLIEESDKLNVKSAVEMYEYLSKEVFPEFKLGLMHGRLSQEEKDRVMLEFAEGRYDILVSTTVIEVGIDVPRANVMVIENPERFGLAQLHQLRGRVGRGGQEAYCFLVVGDVGEEAMERLRFFTLNTDGFKIAEYDLKTRGPGEFFGVKQHGLSGFKVADLYRDLKLLEWAREDVQEIDVEGIELPEEIKLIEVG.

3 domain regions span residues 1 to 350, 351 to 549, and 550 to 780; these read MLCS…GGIP, KKIE…EMPP, and GRKE…IEVG. A wedge domain region spans residues 154-252; it reads RKIFKLNDLL…VTPKEGEYVR (99 aa). 8 residues coordinate ATP: Phe367, Leu369, Gly399, Ser400, Gly401, Lys402, Thr403, and Arg436. Residues 383–544 form the Helicase ATP-binding domain; it reads DMISEKPMNR…FYGDLDVTVI (162 aa). The DEAH box signature appears at 497–500; sequence DEQH. The region spanning 563–728 is the Helicase C-terminal domain; it reads RVNEVYEFVR…EYDLKTRGPG (166 aa).

It belongs to the helicase family. RecG subfamily. As to quaternary structure, monomer.

It catalyses the reaction Couples ATP hydrolysis with the unwinding of duplex DNA by translocating in the 3'-5' direction.. It carries out the reaction ATP + H2O = ADP + phosphate + H(+). In terms of biological role, plays a critical role in recombination and DNA repair. Helps process Holliday junction intermediates to mature products by catalyzing branch migration. Has replication fork (Y-DNA) regression activity, unwinds stalled or blocked replication forks to make a HJ that can be resolved. Has a DNA unwinding activity characteristic of a DNA helicase with 3'-5' polarity. Might be a DNA translocase rather than a bona fide helicase. The protein is ATP-dependent DNA helicase RecG of Thermotoga maritima (strain ATCC 43589 / DSM 3109 / JCM 10099 / NBRC 100826 / MSB8).